A 308-amino-acid chain; its full sequence is Porphobilinogen deaminase (308 aa).

Cys241 is modified (S-(dipyrrolylmethanemethyl)cysteine).

The protein belongs to the HMBS family. Monomer. It depends on dipyrromethane as a cofactor.

The enzyme catalyses 4 porphobilinogen + H2O = hydroxymethylbilane + 4 NH4(+). Its pathway is porphyrin-containing compound metabolism; protoporphyrin-IX biosynthesis; coproporphyrinogen-III from 5-aminolevulinate: step 2/4. Its function is as follows. Tetrapolymerization of the monopyrrole PBG into the hydroxymethylbilane pre-uroporphyrinogen in several discrete steps. This is Porphobilinogen deaminase from Staphylococcus aureus (strain Newman).